We begin with the raw amino-acid sequence, 917 residues long: DNA repair endonuclease XPF (917 aa).

The segment at 1–457 (MEPGLSGERR…EVWVNVRKGD (457 aa)) is helicase-like. Leucine-zipper regions lie at residues 233–254 (LNAC…DLSL) and 270–298 (LDPL…LQYL). N6-acetyllysine is present on K289. Positions 454–479 (RKGDGPKRTTKSDKRPKAAPNKERAS) are enriched in basic and acidic residues. Disordered regions lie at residues 454–524 (RKGD…SSPE) and 643–681 (VPEE…QNGT). Residues 487 to 492 (KRKKQE) carry the Nuclear localization signal motif. Positions 507 to 516 (EDKALEEDLC) are enriched in basic and acidic residues. At S522 the chain carries Phosphoserine. The span at 643–653 (VPEEREGRDET) shows a compositional bias: basic and acidic residues. Residues 659–814 (RGSAALDAPT…PSPHATAELF (156 aa)) form a nuclease region. Residues 684–764 (SIVVDMREFR…RPVLLIEFDP (81 aa)) form the ERCC4 domain. S765 carries the post-translational modification Phosphoserine. The hhH2, dimerization with ERCC1 stretch occupies residues 838–906 (TLPESDRYNP…QLHDFLHTAY (69 aa)). An N6-acetyllysine modification is found at K912.

It belongs to the XPF family. In terms of assembly, heterodimer composed of ERCC1 and ERCC4/XPF. Interacts with SLX4/BTBD12; this interaction is direct and links the ERCC1-ERCC4/XPF complex to SLX4, which may coordinate the action of the structure-specific endonuclease during DNA repair. It depends on Mg(2+) as a cofactor. In terms of processing, acetylation at Lys-912 by KAT5 promotes interaction with ERCC1 by disrupting a salt bridge between Asp-908 and Lys-912, thereby exposing a second binding site for ERCC1. Deacetylated by SIRT1.

Its subcellular location is the nucleus. The protein resides in the chromosome. Its function is as follows. Catalytic component of a structure-specific DNA repair endonuclease responsible for the 5-prime incision during DNA repair, and which is essential for nucleotide excision repair (NER) and interstrand cross-link (ICL) repair. The polypeptide is DNA repair endonuclease XPF (Mus musculus (Mouse)).